Reading from the N-terminus, the 209-residue chain is Na(+)-translocating NADH-quinone reductase subunit D (209 aa).

5 consecutive transmembrane segments (helical) span residues 42-62, 72-92, 103-123, 131-151, and 178-198; these read LVMTIAVTLVTAFSSFFISLI, IIVQMAIIASLVIVVDQILQA, VFVGLIITNCIVMGRAEAYAM, FMDGIGNGLGYGVILVLVGFL, and NGLFLLAPSAFFIIGMLIWGL.

It belongs to the NqrDE/RnfAE family. As to quaternary structure, composed of six subunits; NqrA, NqrB, NqrC, NqrD, NqrE and NqrF.

The protein resides in the cell inner membrane. It carries out the reaction a ubiquinone + n Na(+)(in) + NADH + H(+) = a ubiquinol + n Na(+)(out) + NAD(+). In terms of biological role, NQR complex catalyzes the reduction of ubiquinone-1 to ubiquinol by two successive reactions, coupled with the transport of Na(+) ions from the cytoplasm to the periplasm. NqrA to NqrE are probably involved in the second step, the conversion of ubisemiquinone to ubiquinol. The sequence is that of Na(+)-translocating NADH-quinone reductase subunit D from Photorhabdus laumondii subsp. laumondii (strain DSM 15139 / CIP 105565 / TT01) (Photorhabdus luminescens subsp. laumondii).